The following is a 538-amino-acid chain: Zinc finger protein 155 (538 aa).

Residues 8 to 78 (VTFKDVAVVF…GTATQREGNS (71 aa)) enclose the KRAB domain. C2H2-type zinc fingers lie at residues 176–198 (YTCD…QRVH), 204–226 (FMCD…QRVH), 232–254 (FKCE…RKLH), 260–282 (YICE…KRIH), 288–310 (FKCD…SMVH), 316–338 (FRCD…CMVH), 344–366 (YRCE…QVVH), 372–394 (YNCK…QRVH), 400–422 (FKCE…QRSH), 428–450 (YKCE…QRVH), and 456–478 (YNCK…KRLH). The C2H2-type 12; degenerate zinc finger occupies 484–506 (FKCEDCGKRLVHRTYRKDQPRDY).

The protein belongs to the krueppel C2H2-type zinc-finger protein family.

The protein localises to the nucleus. In terms of biological role, may be involved in transcriptional regulation. In Homo sapiens (Human), this protein is Zinc finger protein 155 (ZNF155).